The primary structure comprises 172 residues: Small ribosomal subunit protein uS5 (172 aa).

The S5 DRBM domain maps to 17–80; that stretch reads LREKMISVNR…EQARRNMFKV (64 aa).

This sequence belongs to the universal ribosomal protein uS5 family. As to quaternary structure, part of the 30S ribosomal subunit. Contacts proteins S4 and S8.

Functionally, with S4 and S12 plays an important role in translational accuracy. Located at the back of the 30S subunit body where it stabilizes the conformation of the head with respect to the body. This chain is Small ribosomal subunit protein uS5, found in Burkholderia pseudomallei (strain 1106a).